A 713-amino-acid polypeptide reads, in one-letter code: MNQELLSVGSKRRRTGGSLRGNASSSQVDEEQMNRVVEEDPQQQPRHQEEEHTARNGELVGADPRPGAQNDSQQGQVEENNNRFVSVDEDSSGNQEEQEEDEEHAGEQEEEEEEEEEEEEEEEMDQESDDFDQSDDSSREDEHTHNSNVTNCTSVVDLPINQLSSPFYTKTTKMKRKLDHGSEVRSFSLGKKPCKVSDYTSTTGLVPCSATPTTFGDLRAANGQGQQRRRITSVQPPTGLQEWLKMFQSWSGPEKLLALDELIDSCEPTQVKHMMQVIEPQFQRDFISLLPKELALYVLSFLEPKDLLQAAQTCRYWRILAEDNLLWREKCKEEGIDEPLHIKRRKIIKPGFIHSPWKSAYIRQHRIDTNWRRGELRSPKVLKGHDDHVITCLQFCGNRIVSGSDDNTLKVWSAVTGKCLRTLVGHTGGVWSSQMRDNIIISGSTDRTLKVWNAETGECIHTLYGHTSTVRCMHLHEKRVVSGSRDATLRVWDIETGQCLHVLMGHVAAVRCVQYDGRRVVSGAYDFMVKVWDPETETCLHTLQGHTNRVYSLQFDGIHVVSGSLDTSIRVWDVETGNCIHTLTGHQSLTSGMELKDNILVSGNADSTVKIWDIKTGQCLQTLQGPSKHQSAVTCLQFNKNFVITSSDDGTVKLWDLKTGEFIRNLVTLESGGSGGVVWRIRASNTKLVCAVGSRNGTEETKLLVLDFDVDMK.

A disordered region spans residues 1 to 150 (MNQELLSVGS…DEHTHNSNVT (150 aa)). Residue serine 26 is modified to Phosphoserine. The segment covering 46–55 (RHQEEEHTAR) has biased composition (basic and acidic residues). Residues 69–84 (QNDSQQGQVEENNNRF) are compositionally biased toward polar residues. The segment covering 87–135 (VDEDSSGNQEEQEEDEEHAGEQEEEEEEEEEEEEEEEMDQESDDFDQSD) has biased composition (acidic residues). Residues 94-136 (NQEEQEEDEEHAGEQEEEEEEEEEEEEEEEMDQESDDFDQSDD) adopt a coiled-coil conformation. The span at 136-145 (DSSREDEHTH) shows a compositional bias: basic and acidic residues. The residue at position 211 (threonine 211) is a Phosphothreonine. Serine 233 is subject to Phosphoserine. The F-box domain maps to 284 to 330 (RDFISLLPKELALYVLSFLEPKDLLQAAQTCRYWRILAEDNLLWREK). WD repeat units follow at residues 384-424 (GHDD…RTLV), 426-462 (HTGGVWSSQMRDNIIISGSTDRTLKVWNAETGECIHT), 465-504 (GHTSTVRCMHLHEKRVVSGSRDATLRVWDIETGQCLHVLM), 506-542 (HVAAVRCVQYDGRRVVSGAYDFMVKVWDPETETCLHT), 545-584 (GHTNRVYSLQFDGIHVVSGSLDTSIRVWDVETGNCIHTLT), 586-624 (HQSLTSGMELKDNILVSGNADSTVKIWDIKTGQCLQTLQ), and 628-665 (KHQSAVTCLQFNKNFVITSSDDGTVKLWDLKTGEFIRN).

In terms of assembly, homodimer; homodimerization plays a role in substrate binding and/or ubiquitination and degradation. Component of the SCF(FBXW7) complex consisting of CUL1, RBX1, SKP1 and FBXW7. Interacts (via F-box domain) with SKP1. Interacts (via F-box domain) with pseudophosphatase STYX; the interaction is direct and prevents FBXW7 interaction with SKP1. Interacts with cyclin-E (CCNE1 or CCNE2). Interacts with PSEN1. Forms a trimeric complex with NOTCH1 and SGK1. Interacts with NOTCH1 intracellular domain/NICD and NOTCH4 intracellular domain/NICD. Interacts with NOTCH2 intracellular domain (N2ICD). Interacts with MYC (when phosphorylated). Interacts with USP28, counteracting ubiquitination of MYC. Interacts (when phosphorylated at Thr-211) with PIN1, disrupting FBXW7 dimerization and promoting FBXW7 autoubiquitination and degradation. Interacts with UBE2QL1. Interacts with FAM83D; promotes FBXW7 degradation. Interacts with MYCN; FBXW7 competes with AURKA for binding to unphosphorylated MYCN but not for binding to phosphorylated MYCN. Interacts with JUN. Found in a complex with JUN and PRR7. Interacts with JUN and PRR7; the interaction inhibits ubiquitination-mediated JUN degradation, promoting its phosphorylation and transcriptional activity. Interacts with NFE2L1. Interacts with NR1D1. Interacts with RICTOR; mediates RICTOR ubiquitination and degradation. In terms of processing, phosphorylation at Thr-211 promotes interaction with PIN1, leading to disrupt FBXW7 dimerization and promoting FBXW7 autoubiquitination and degradation. Phosphorylated by ATM at Ser-26 in response to DNA damage, promoting recruitment to DNA damage sites and 'Lys-63'-linked ubiquitination of phosphorylated XRCC4. Ubiquitinated: autoubiquitinates following phosphorylation at Thr-211 and subsequent interaction with PIN1. Ubiquitination leads to its degradation.

Its subcellular location is the nucleus. It is found in the nucleoplasm. It localises to the chromosome. Its pathway is protein modification; protein ubiquitination. Substrate recognition component of a SCF (SKP1-CUL1-F-box protein) E3 ubiquitin-protein ligase complex which mediates the ubiquitination and subsequent proteasomal degradation of target proteins. Recognizes and binds phosphorylated sites/phosphodegrons within target proteins and thereafter brings them to the SCF complex for ubiquitination. Identified substrates include cyclin-E (CCNE1 or CCNE2), JUN, MYC, NOTCH1 released notch intracellular domain (NICD), NOTCH2, MCL1, MLST8, RICTOR and probably PSEN1. Acts as a negative regulator of JNK signaling by binding to phosphorylated JUN and promoting its ubiquitination and subsequent degradation. SCF(FBXW7) complex mediates the ubiquitination and subsequent degradation of NFE2L1. Involved in bone homeostasis and negative regulation of osteoclast differentiation. Regulates the amplitude of the cyclic expression of hepatic core clock genes and genes involved in lipid and glucose metabolism via ubiquitination and proteasomal degradation of their transcriptional repressor NR1D1; CDK1-dependent phosphorylation of NR1D1 is necessary for SCF(FBXW7)-mediated ubiquitination. Also able to promote 'Lys-63'-linked ubiquitination in response to DNA damage. The SCF(FBXW7) complex facilitates double-strand break repair following phosphorylation by ATM: phosphorylation promotes localization to sites of double-strand breaks and 'Lys-63'-linked ubiquitination of phosphorylated XRCC4, enhancing DNA non-homologous end joining. The protein is F-box/WD repeat-containing protein 7 of Rattus norvegicus (Rat).